We begin with the raw amino-acid sequence, 235 residues long: Orotidine 5'-phosphate decarboxylase (235 aa).

Residues Asp-12, Lys-34, 61–70, Thr-116, Arg-177, Gln-186, and Arg-207 contribute to the substrate site; that span reads DMKLLDIDNT. The Proton donor role is filled by Lys-63.

The protein belongs to the OMP decarboxylase family. Type 1 subfamily. Homodimer.

It carries out the reaction orotidine 5'-phosphate + H(+) = UMP + CO2. Its pathway is pyrimidine metabolism; UMP biosynthesis via de novo pathway; UMP from orotate: step 2/2. In terms of biological role, catalyzes the decarboxylation of orotidine 5'-monophosphate (OMP) to uridine 5'-monophosphate (UMP). The sequence is that of Orotidine 5'-phosphate decarboxylase from Rhizobium leguminosarum bv. trifolii (strain WSM2304).